The primary structure comprises 138 residues: MRALWIVAVLLVGVEGHLLQFNKMIKFETRKNAIPFYAFYGCYCGWGGRGRPKDATDRCCFVHDCCYGKLAKCNTKWDIYPYSLKSGYITCGKGTWCEEQICECDRVAAECLRRSLSTYKYGYMFYPDSRCRGPSETC.

Positions Met-1–Gly-16 are cleaved as a signal peptide. Cystine bridges form between Cys-42-Cys-131, Cys-44-Cys-60, Cys-59-Cys-111, Cys-65-Cys-138, Cys-66-Cys-104, Cys-73-Cys-97, and Cys-91-Cys-102. Positions 43, 45, and 47 each coordinate Ca(2+). His-63 is a catalytic residue. Asp-64 is a Ca(2+) binding site. Asp-105 is an active-site residue.

As to quaternary structure, heterodimer of an acidic subunit and a basic chain. The acidic subunit is non-toxic, without enzymatic activity and comprises 3 peptides that are cross-linked by 7 disulfide bridges. The basic subunit is toxic, has phospholipase A2 activity and is composed of a single chain. The cofactor is Ca(2+). In terms of tissue distribution, expressed by the venom gland.

Its subcellular location is the secreted. It carries out the reaction a 1,2-diacyl-sn-glycero-3-phosphocholine + H2O = a 1-acyl-sn-glycero-3-phosphocholine + a fatty acid + H(+). Snake venom phospholipase A2 (PLA2) that inhibits neuromuscular transmission by blocking acetylcholine release from the nerve termini. PLA2 catalyzes the calcium-dependent hydrolysis of the 2-acyl groups in 3-sn-phosphoglycerides. This chain is Basic phospholipase A2 Mtx-b, found in Crotalus scutulatus scutulatus (Mojave rattlesnake).